The chain runs to 560 residues: Membrane protein insertase YidC (560 aa).

6 helical membrane passes run 5 to 25 (IINL…WQYF), 334 to 354 (AIDF…MNFF), 357 to 377 (YVGN…LLMF), 431 to 451 (LPIL…YVTI), 476 to 496 (LFGL…WPIL), and 522 to 542 (FMPL…LIYW).

It belongs to the OXA1/ALB3/YidC family. Type 1 subfamily. As to quaternary structure, interacts with the Sec translocase complex via SecD. Specifically interacts with transmembrane segments of nascent integral membrane proteins during membrane integration.

It is found in the cell inner membrane. Required for the insertion and/or proper folding and/or complex formation of integral membrane proteins into the membrane. Involved in integration of membrane proteins that insert both dependently and independently of the Sec translocase complex, as well as at least some lipoproteins. Aids folding of multispanning membrane proteins. This Rickettsia rickettsii (strain Sheila Smith) protein is Membrane protein insertase YidC.